The sequence spans 74 residues: Putative membrane protein insertion efficiency factor (74 aa).

Belongs to the UPF0161 family.

It is found in the cell membrane. Could be involved in insertion of integral membrane proteins into the membrane. The chain is Putative membrane protein insertion efficiency factor from Bacillus pumilus (strain SAFR-032).